Here is a 260-residue protein sequence, read N- to C-terminus: Hydroxyacylglutathione hydrolase (260 aa).

Zn(2+) is bound by residues His-66, His-68, Asp-70, His-71, His-125, Asp-150, and His-188.

This sequence belongs to the metallo-beta-lactamase superfamily. Glyoxalase II family. Monomer. It depends on Zn(2+) as a cofactor.

It catalyses the reaction an S-(2-hydroxyacyl)glutathione + H2O = a 2-hydroxy carboxylate + glutathione + H(+). It participates in secondary metabolite metabolism; methylglyoxal degradation; (R)-lactate from methylglyoxal: step 2/2. Its function is as follows. Thiolesterase that catalyzes the hydrolysis of S-D-lactoyl-glutathione to form glutathione and D-lactic acid. This chain is Hydroxyacylglutathione hydrolase, found in Prochlorococcus marinus (strain MIT 9303).